A 419-amino-acid polypeptide reads, in one-letter code: UDP-N-acetylglucosamine 1-carboxyvinyltransferase (419 aa).

Position 23–24 (23–24) interacts with phosphoenolpyruvate; that stretch reads KN. R92 lines the UDP-N-acetyl-alpha-D-glucosamine pocket. Catalysis depends on C116, which acts as the Proton donor. C116 bears the 2-(S-cysteinyl)pyruvic acid O-phosphothioketal mark. Residues 121–125, 161–164, D306, and I328 each bind UDP-N-acetyl-alpha-D-glucosamine; these read RPVDL and KVSV.

It belongs to the EPSP synthase family. MurA subfamily.

Its subcellular location is the cytoplasm. It carries out the reaction phosphoenolpyruvate + UDP-N-acetyl-alpha-D-glucosamine = UDP-N-acetyl-3-O-(1-carboxyvinyl)-alpha-D-glucosamine + phosphate. The protein operates within cell wall biogenesis; peptidoglycan biosynthesis. Functionally, cell wall formation. Adds enolpyruvyl to UDP-N-acetylglucosamine. This chain is UDP-N-acetylglucosamine 1-carboxyvinyltransferase, found in Vibrio cholerae serotype O1 (strain ATCC 39541 / Classical Ogawa 395 / O395).